A 115-amino-acid polypeptide reads, in one-letter code: MVKLHFSRNLRLLKPDHFAFVFQKPKLVRIQQMVILGRINTLVYPRVGMIIAKKYIKLAHERNHIKRLIRESFRLNQHKLCIMDFIIIAKSGLTKMNNFDIIKALEKLWHRYYRL.

The protein belongs to the RnpA family. In terms of assembly, consists of a catalytic RNA component (M1 or rnpB) and a protein subunit.

It carries out the reaction Endonucleolytic cleavage of RNA, removing 5'-extranucleotides from tRNA precursor.. In terms of biological role, RNaseP catalyzes the removal of the 5'-leader sequence from pre-tRNA to produce the mature 5'-terminus. It can also cleave other RNA substrates such as 4.5S RNA. The protein component plays an auxiliary but essential role in vivo by binding to the 5'-leader sequence and broadening the substrate specificity of the ribozyme. The protein is Ribonuclease P protein component of Baumannia cicadellinicola subsp. Homalodisca coagulata.